The following is a 256-amino-acid chain: DNA repair protein RecO (256 aa).

This sequence belongs to the RecO family.

Its function is as follows. Involved in DNA repair and RecF pathway recombination. The polypeptide is DNA repair protein RecO (Rhizobium johnstonii (strain DSM 114642 / LMG 32736 / 3841) (Rhizobium leguminosarum bv. viciae)).